The sequence spans 315 residues: Glycine--tRNA ligase alpha subunit (315 aa).

Belongs to the class-II aminoacyl-tRNA synthetase family. As to quaternary structure, tetramer of two alpha and two beta subunits.

Its subcellular location is the cytoplasm. It carries out the reaction tRNA(Gly) + glycine + ATP = glycyl-tRNA(Gly) + AMP + diphosphate. This Ectopseudomonas mendocina (strain ymp) (Pseudomonas mendocina) protein is Glycine--tRNA ligase alpha subunit.